Consider the following 311-residue polypeptide: Peptide methionine sulfoxide reductase MsrA/MsrB (311 aa).

The tract at residues 1–155 (MAEIYLAGGC…PGGYCHINVN (155 aa)) is peptide methionine sulfoxide reductase A. C10 is an active-site residue. The 124-residue stretch at 172–295 (DAELKEQLTQ…NSAALRFIPK (124 aa)) folds into the MsrB domain. C284 acts as the Nucleophile in catalysis.

It in the N-terminal section; belongs to the MsrA Met sulfoxide reductase family. The protein in the C-terminal section; belongs to the MsrB Met sulfoxide reductase family.

The catalysed reaction is L-methionyl-[protein] + [thioredoxin]-disulfide + H2O = L-methionyl-(S)-S-oxide-[protein] + [thioredoxin]-dithiol. The enzyme catalyses [thioredoxin]-disulfide + L-methionine + H2O = L-methionine (S)-S-oxide + [thioredoxin]-dithiol. It catalyses the reaction L-methionyl-[protein] + [thioredoxin]-disulfide + H2O = L-methionyl-(R)-S-oxide-[protein] + [thioredoxin]-dithiol. Its function is as follows. Has an important function as a repair enzyme for proteins that have been inactivated by oxidation. Catalyzes the reversible oxidation-reduction of methionine sulfoxide in proteins to methionine. Involved in protection against oxidative stress when the bacterium enters the host bloodstream and required for maximal growth under aerobic and anaerobic conditions. The polypeptide is Peptide methionine sulfoxide reductase MsrA/MsrB (msrAB) (Streptococcus gordonii (strain Challis / ATCC 35105 / BCRC 15272 / CH1 / DL1 / V288)).